Here is a 554-residue protein sequence, read N- to C-terminus: Chaperonin GroEL (554 aa).

Residues Thr29–Pro32, Lys50, Asp86–Thr90, Gly418, and Asp499 each bind ATP. Residues His528–Phe554 form a disordered region. A compositionally biased stretch (gly residues) spans Ser537–Phe554.

This sequence belongs to the chaperonin (HSP60) family. Forms a cylinder of 14 subunits composed of two heptameric rings stacked back-to-back. Interacts with the co-chaperonin GroES.

It localises to the cytoplasm. It carries out the reaction ATP + H2O + a folded polypeptide = ADP + phosphate + an unfolded polypeptide.. Its function is as follows. Together with its co-chaperonin GroES, plays an essential role in assisting protein folding. The GroEL-GroES system forms a nano-cage that allows encapsulation of the non-native substrate proteins and provides a physical environment optimized to promote and accelerate protein folding. The chain is Chaperonin GroEL from Orientia tsutsugamushi (strain Boryong) (Rickettsia tsutsugamushi).